Here is a 159-residue protein sequence, read N- to C-terminus: Eukaryotic translation initiation factor 5A-2 (159 aa).

The segment covering 1 to 10 has biased composition (basic and acidic residues); it reads MSDDEHHFEA. Residues 1–25 are disordered; the sequence is MSDDEHHFEASESGASKTYPQSAGN. Ser2 carries the phosphoserine modification. Residues 13–24 show a composition bias toward polar residues; it reads SGASKTYPQSAG. Residue Lys51 is modified to Hypusine.

The protein belongs to the eIF-5A family. Homodimer. Interacts with AHK4 and AHP1. Cytokinin regulates the formation of the AHP1-AHK4-ELF5A-2 complex. In terms of processing, lys-51 undergoes hypusination, a unique post-translational modification that consists in the addition of a butylamino group from spermidine to lysine side chain, leading to the formation of the unusual amino acid hypusine. eIF-5As are the only known proteins to undergo this modification, which is essential for their function. In terms of tissue distribution, ubiquitous. In roots, expressed mostly inside the stele of the mature zone.

Its subcellular location is the cytoplasm. The protein resides in the nucleus. Functionally, translation factor that promotes translation elongation and termination, particularly upon ribosome stalling at specific amino acid sequence contexts. Binds between the exit (E) and peptidyl (P) site of the ribosome and promotes rescue of stalled ribosome: specifically required for efficient translation of polyproline-containing peptides as well as other motifs that stall the ribosome. Acts as a ribosome quality control (RQC) cofactor by joining the RQC complex to facilitate peptidyl transfer during CAT tailing step. Regulates cytokinin-mediated root protoxylem specification and represses secifically the expression of AHP6. Regulates the induction of programmed cell death caused by infection with virulent pathogen. The chain is Eukaryotic translation initiation factor 5A-2 (ELF5A-2) from Arabidopsis thaliana (Mouse-ear cress).